The following is a 751-amino-acid chain: Methionine--tRNA ligase, cytoplasmic (751 aa).

Serine 2 is subject to N-acetylserine. The interval 36 to 92 (LKPEVDNDNAAMELRNTKEPFLLFDANAILRYVMDDFEGQTSDKYQFALASLQNLLY) is interaction with ARC1. Residues 205–215 (PYVNNVPHLGN) carry the 'HIGH' region motif. Lysine 411 lines the ATP pocket. The 'KMSKS' region signature appears at 525-529 (KFSKS).

This sequence belongs to the class-I aminoacyl-tRNA synthetase family. Component of a yeast aminoacyl-tRNA synthase (aaRS) complex formed by methionyl-tRNA synthase MES1, glutamyl-tRNA synthase GUS1 and the tRNA aminoacylation cofactor ARC1 in a stoichiometric complex. Interacts (via N-ter) with ARC1 (via N-ter). Can also form a stable binary complex with ARC1 that is functional in terms of aminoacylation. ARC1 increases the affinity for cognate tRNAs due to the presence of a tRNA binding domain in the middle and C-terminal part of ARC1.

Its subcellular location is the cytoplasm. It carries out the reaction tRNA(Met) + L-methionine + ATP = L-methionyl-tRNA(Met) + AMP + diphosphate. Its function is as follows. Catalyzes the attachment of methionine to tRNA(Met) in a two-step reaction: methionine is first activated by ATP to form Met-AMP and then transferred to the acceptor end of tRNA(Met). This is Methionine--tRNA ligase, cytoplasmic (MES1) from Saccharomyces cerevisiae (strain ATCC 204508 / S288c) (Baker's yeast).